A 267-amino-acid chain; its full sequence is L-aspartate dehydrogenase (267 aa).

Residues alanine 124 and asparagine 190 each contribute to the NAD(+) site. Histidine 220 is an active-site residue.

The protein belongs to the L-aspartate dehydrogenase family.

It catalyses the reaction L-aspartate + NADP(+) + H2O = oxaloacetate + NH4(+) + NADPH + H(+). The catalysed reaction is L-aspartate + NAD(+) + H2O = oxaloacetate + NH4(+) + NADH + H(+). It participates in cofactor biosynthesis; NAD(+) biosynthesis; iminoaspartate from L-aspartate (dehydrogenase route): step 1/1. Specifically catalyzes the NAD or NADP-dependent dehydrogenation of L-aspartate to iminoaspartate. The polypeptide is L-aspartate dehydrogenase (Ralstonia pickettii (strain 12J)).